A 369-amino-acid polypeptide reads, in one-letter code: Queuine tRNA-ribosyltransferase (369 aa).

Asp-90 serves as the catalytic Proton acceptor. Substrate is bound by residues 90–94 (DSGGF), Asp-144, Gln-186, and Gly-213. Residues 244–250 (GVGKPAD) are RNA binding. The active-site Nucleophile is the Asp-263. Residues Cys-301, Cys-303, Cys-306, and His-332 each coordinate Zn(2+).

It belongs to the queuine tRNA-ribosyltransferase family. As to quaternary structure, homodimer. Within each dimer, one monomer is responsible for RNA recognition and catalysis, while the other monomer binds to the replacement base PreQ1. The cofactor is Zn(2+).

The enzyme catalyses 7-aminomethyl-7-carbaguanine + guanosine(34) in tRNA = 7-aminomethyl-7-carbaguanosine(34) in tRNA + guanine. It participates in tRNA modification; tRNA-queuosine biosynthesis. In terms of biological role, catalyzes the base-exchange of a guanine (G) residue with the queuine precursor 7-aminomethyl-7-deazaguanine (PreQ1) at position 34 (anticodon wobble position) in tRNAs with GU(N) anticodons (tRNA-Asp, -Asn, -His and -Tyr). Catalysis occurs through a double-displacement mechanism. The nucleophile active site attacks the C1' of nucleotide 34 to detach the guanine base from the RNA, forming a covalent enzyme-RNA intermediate. The proton acceptor active site deprotonates the incoming PreQ1, allowing a nucleophilic attack on the C1' of the ribose to form the product. After dissociation, two additional enzymatic reactions on the tRNA convert PreQ1 to queuine (Q), resulting in the hypermodified nucleoside queuosine (7-(((4,5-cis-dihydroxy-2-cyclopenten-1-yl)amino)methyl)-7-deazaguanosine). This Dichelobacter nodosus (strain VCS1703A) protein is Queuine tRNA-ribosyltransferase.